The chain runs to 525 residues: Delta(24)-sterol reductase homolog dhcr-24 (525 aa).

The next 2 membrane-spanning stretches (helical) occupy residues 27–47 (WVFVVPFLLPLSFLFNTVFDF) and 214–234 (SLFFAIPWSQGTICFLVAATI). An FAD-binding PCMH-type domain is found at 47 to 239 (FRNRIVHAVN…VAATIKIIPC (193 aa)).

This sequence belongs to the FAD-binding oxidoreductase/transferase type 4 family. It depends on FAD as a cofactor.

Its subcellular location is the endoplasmic reticulum membrane. It localises to the golgi apparatus membrane. It carries out the reaction cholesterol + NADP(+) = desmosterol + NADPH + H(+). The enzyme catalyses lanosterol + NADPH + H(+) = 24,25-dihydrolanosterol + NADP(+). It catalyses the reaction 5alpha-cholest-8-en-3beta-ol + NADP(+) = zymosterol + NADPH + H(+). Its pathway is steroid biosynthesis; cholesterol biosynthesis. Catalyzes the reduction of the delta-24 double bond of sterol intermediates during cholesterol biosynthesis. In Caenorhabditis elegans, this protein is Delta(24)-sterol reductase homolog dhcr-24.